Here is a 311-residue protein sequence, read N- to C-terminus: Olfactory receptor-like protein OLF1 (311 aa).

Residues 1–24 (MDGNYTLVTEFILLGFPTRPELQI) are Extracellular-facing. A glycan (N-linked (GlcNAc...) asparagine) is linked at asparagine 4. Residues 25-48 (VLFLVFLTLYGIILTGNIGLMMLI) form a helical membrane-spanning segment. The Cytoplasmic portion of the chain corresponds to 49-56 (RTDPHLQT). The helical transmembrane segment at 57-78 (PMYFFLSNLSFADLCFSSAIVP) threads the bilayer. Residues 79–99 (KMLVNFLSENKSISLYGCALQ) lie on the Extracellular side of the membrane. Residues 100–119 (FYFSCAFADTESFILAAMAY) form a helical membrane-spanning segment. Residues 120 to 138 (DRYVAICNPLLYTVVMSRG) lie on the Cytoplasmic side of the membrane. A helical membrane pass occupies residues 139–157 (ICVWLIVLSYIGGNMSSLV). Topologically, residues 158 to 195 (HTSFAFILKYCDKNVINHFFCDLPPLLKLSCTDTSVNE) are extracellular. A helical membrane pass occupies residues 196–218 (WLLSTYGSSVEIFCFIVIVISYY). The Cytoplasmic segment spans residues 219–235 (FILRSVLRIRSSSGRKK). A helical transmembrane segment spans residues 236 to 259 (TFSTCASHLTSVAIYQGTLLFIYS). Over 260 to 271 (RPTYLYTPNTDK) the chain is Extracellular. Residues 272-291 (IISVFYTIIIPVLNPLIYSL) form a helical membrane-spanning segment. Over 292–311 (RNKDVKDAAKRAVRLKVDSS) the chain is Cytoplasmic.

The protein belongs to the G-protein coupled receptor 1 family.

It is found in the cell membrane. Putative odorant or sperm cell receptor. In Canis lupus familiaris (Dog), this protein is Olfactory receptor-like protein OLF1.